We begin with the raw amino-acid sequence, 721 residues long: Polyphosphate kinase (721 aa).

Asparagine 47 is an ATP binding site. Mg(2+) contacts are provided by arginine 377 and arginine 407. Catalysis depends on histidine 437, which acts as the Phosphohistidine intermediate. 3 residues coordinate ATP: tyrosine 471, arginine 567, and histidine 595.

It belongs to the polyphosphate kinase 1 (PPK1) family. It depends on Mg(2+) as a cofactor. In terms of processing, an intermediate of this reaction is the autophosphorylated ppk in which a phosphate is covalently linked to a histidine residue through a N-P bond.

The catalysed reaction is [phosphate](n) + ATP = [phosphate](n+1) + ADP. Its function is as follows. Catalyzes the reversible transfer of the terminal phosphate of ATP to form a long-chain polyphosphate (polyP). The chain is Polyphosphate kinase from Exiguobacterium sp. (strain ATCC BAA-1283 / AT1b).